Consider the following 208-residue polypeptide: Outer-membrane lipoprotein carrier protein (208 aa).

Residues 1–22 form the signal peptide; it reads MRKTLTALMLSLPLLTPHMAFA.

It belongs to the LolA family. As to quaternary structure, monomer.

It is found in the periplasm. Functionally, participates in the translocation of lipoproteins from the inner membrane to the outer membrane. Only forms a complex with a lipoprotein if the residue after the N-terminal Cys is not an aspartate (The Asp acts as a targeting signal to indicate that the lipoprotein should stay in the inner membrane). The sequence is that of Outer-membrane lipoprotein carrier protein from Shewanella woodyi (strain ATCC 51908 / MS32).